Here is a 163-residue protein sequence, read N- to C-terminus: 2-C-methyl-D-erythritol 2,4-cyclodiphosphate synthase (163 aa).

A divalent metal cation is bound by residues Asp15 and His17. Residues 15-17 (DFH) and 41-42 (HS) each bind 4-CDP-2-C-methyl-D-erythritol 2-phosphate. His49 is a binding site for a divalent metal cation. 4-CDP-2-C-methyl-D-erythritol 2-phosphate contacts are provided by residues 63-65 (DIG) and 139-142 (TTNE).

It belongs to the IspF family. In terms of assembly, homotrimer. The cofactor is a divalent metal cation.

The enzyme catalyses 4-CDP-2-C-methyl-D-erythritol 2-phosphate = 2-C-methyl-D-erythritol 2,4-cyclic diphosphate + CMP. It participates in isoprenoid biosynthesis; isopentenyl diphosphate biosynthesis via DXP pathway; isopentenyl diphosphate from 1-deoxy-D-xylulose 5-phosphate: step 4/6. In terms of biological role, involved in the biosynthesis of isopentenyl diphosphate (IPP) and dimethylallyl diphosphate (DMAPP), two major building blocks of isoprenoid compounds. Catalyzes the conversion of 4-diphosphocytidyl-2-C-methyl-D-erythritol 2-phosphate (CDP-ME2P) to 2-C-methyl-D-erythritol 2,4-cyclodiphosphate (ME-CPP) with a corresponding release of cytidine 5-monophosphate (CMP). The polypeptide is 2-C-methyl-D-erythritol 2,4-cyclodiphosphate synthase (Gloeobacter violaceus (strain ATCC 29082 / PCC 7421)).